We begin with the raw amino-acid sequence, 635 residues long: Chaperone protein HtpG (635 aa).

The a; substrate-binding stretch occupies residues 1–343 (MTAEATVETR…SNDLSLNVSR (343 aa)). A b region spans residues 344 to 560 (EILQQDPNID…EHDMGAQMRR (217 aa)). Residues 561 to 635 (LLEAAGQAVP…LNKLLLELSN (75 aa)) are c.

This sequence belongs to the heat shock protein 90 family. In terms of assembly, homodimer.

The protein resides in the cytoplasm. Molecular chaperone. Has ATPase activity. This is Chaperone protein HtpG from Saccharophagus degradans (strain 2-40 / ATCC 43961 / DSM 17024).